The following is a 244-amino-acid chain: 1-(5-phosphoribosyl)-5-[(5-phosphoribosylamino)methylideneamino] imidazole-4-carboxamide isomerase (244 aa).

Asp-7 serves as the catalytic Proton acceptor. The active-site Proton donor is the Asp-129.

This sequence belongs to the HisA/HisF family.

The protein resides in the cytoplasm. It carries out the reaction 1-(5-phospho-beta-D-ribosyl)-5-[(5-phospho-beta-D-ribosylamino)methylideneamino]imidazole-4-carboxamide = 5-[(5-phospho-1-deoxy-D-ribulos-1-ylimino)methylamino]-1-(5-phospho-beta-D-ribosyl)imidazole-4-carboxamide. It functions in the pathway amino-acid biosynthesis; L-histidine biosynthesis; L-histidine from 5-phospho-alpha-D-ribose 1-diphosphate: step 4/9. The sequence is that of 1-(5-phosphoribosyl)-5-[(5-phosphoribosylamino)methylideneamino] imidazole-4-carboxamide isomerase from Pseudoalteromonas atlantica (strain T6c / ATCC BAA-1087).